Reading from the N-terminus, the 132-residue chain is Small ribosomal subunit protein uS8 (132 aa).

It belongs to the universal ribosomal protein uS8 family. As to quaternary structure, part of the 30S ribosomal subunit. Contacts proteins S5 and S12.

Functionally, one of the primary rRNA binding proteins, it binds directly to 16S rRNA central domain where it helps coordinate assembly of the platform of the 30S subunit. In Caulobacter sp. (strain K31), this protein is Small ribosomal subunit protein uS8.